We begin with the raw amino-acid sequence, 185 residues long: GLNDFQKQKIKFTFDFFLDYNKDGSIQWEDFEEMIKRYKEVNKGSLSDADYKSMQASLEDEWRDLKGRADINKDDVVSWEEYLAMWEKTIATCKSVADLPAWCQNRIPFLFKGMDVSGDGIVDLEEFQNYCKNFQLQCADVPAVYNVITDGGKVTFDLNRYKELYYRLLTSPAADAGNTLMGQKP.

EF-hand domains lie at 5–41 (FQKQKIKFTFDFFLDYNKDGSIQWEDFEEMIKRYKEV), 57–92 (SLEDEWRDLKGRADINKDDVVSWEEYLAMWEKTIAT), 102–137 (WCQNRIPFLFKGMDVSGDGIVDLEEFQNYCKNFQLQ), and 138–173 (CADVPAVYNVITDGGKVTFDLNRYKELYYRLLTSPA). Ca(2+) contacts are provided by aspartate 19, asparagine 21, aspartate 23, serine 25, aspartate 30, aspartate 70, asparagine 72, aspartate 74, glutamate 81, aspartate 115, serine 117, aspartate 119, and glutamate 126.

Its function is as follows. Like parvalbumins, SCPs seem to be more abundant in fast contracting muscles, but no functional relationship can be established from this distribution. In Branchiostoma lanceolatum (Common lancelet), this protein is Sarcoplasmic calcium-binding proteins I, III, and IV.